The following is a 526-amino-acid chain: Catalase (526 aa).

Residues 1–22 (MADDREKSTDQMKLWKEGRGSQ) show a composition bias toward basic and acidic residues. Residues 1 to 29 (MADDREKSTDQMKLWKEGRGSQRPDVLTT) are disordered. Catalysis depends on residues histidine 75 and asparagine 148. Residues histidine 194, serine 201, arginine 203, asparagine 213, lysine 237, tryptophan 303, histidine 305, and lysine 306 each coordinate NADP(+). Tyrosine 358 contributes to the heme binding site.

It belongs to the catalase family. As to quaternary structure, homotetramer. The cofactor is heme. NADP(+) is required as a cofactor.

Its subcellular location is the peroxisome matrix. It carries out the reaction 2 H2O2 = O2 + 2 H2O. Catalyzes the degradation of hydrogen peroxide (H(2)O(2)) generated by peroxisomal oxidases to water and oxygen, thereby protecting cells from the toxic effects of hydrogen peroxide. In Danio rerio (Zebrafish), this protein is Catalase (cat).